We begin with the raw amino-acid sequence, 180 residues long: MAESELQLVAQRIRSFPDFPIPGVLFRDISPLLKDPASFRASIRLLASHLKSTHGGKIDYIAGLDSRGFLFGPSLAQELGLGCVLIRKRGKLPGPTVSASYALEYGKAELEIQKDALEPGQKVVVVDDLLATGGTMCAACELLGQLQAEVVECVSLVELTSLKGREKLGSVPFFSLLQYE.

Ala-2 is subject to N-acetylalanine. 3 positions are modified to phosphoserine: Ser-4, Ser-15, and Ser-30. Phosphotyrosine is present on Tyr-60. Ser-66 carries the phosphoserine modification. Lys-114 is subject to N6-acetyllysine. Thr-135 carries the phosphothreonine modification.

Belongs to the purine/pyrimidine phosphoribosyltransferase family. In terms of assembly, homodimer.

It is found in the cytoplasm. It catalyses the reaction AMP + diphosphate = 5-phospho-alpha-D-ribose 1-diphosphate + adenine. It participates in purine metabolism; AMP biosynthesis via salvage pathway; AMP from adenine: step 1/1. Its function is as follows. Catalyzes a salvage reaction resulting in the formation of AMP, that is energically less costly than de novo synthesis. This Cricetulus griseus (Chinese hamster) protein is Adenine phosphoribosyltransferase.